Reading from the N-terminus, the 371-residue chain is Chaperone protein DnaJ (371 aa).

Residues 5–69 (DYYEVLGLSK…QKRAQYDQFG (65 aa)) enclose the J domain. The segment at 133–215 (GKELNVEIPV…CHGSGKVRKR (83 aa)) adopts a CR-type zinc-finger fold. Zn(2+) is bound by residues Cys146, Cys149, Cys163, Cys166, Cys189, Cys192, Cys203, and Cys206. CXXCXGXG motif repeat units follow at residues 146-153 (CDTCKGSG), 163-170 (CKHCSGSG), 189-196 (CSHCSGTG), and 203-210 (CTTCHGSG).

The protein belongs to the DnaJ family. Homodimer. It depends on Zn(2+) as a cofactor.

It localises to the cytoplasm. Participates actively in the response to hyperosmotic and heat shock by preventing the aggregation of stress-denatured proteins and by disaggregating proteins, also in an autonomous, DnaK-independent fashion. Unfolded proteins bind initially to DnaJ; upon interaction with the DnaJ-bound protein, DnaK hydrolyzes its bound ATP, resulting in the formation of a stable complex. GrpE releases ADP from DnaK; ATP binding to DnaK triggers the release of the substrate protein, thus completing the reaction cycle. Several rounds of ATP-dependent interactions between DnaJ, DnaK and GrpE are required for fully efficient folding. Also involved, together with DnaK and GrpE, in the DNA replication of plasmids through activation of initiation proteins. The sequence is that of Chaperone protein DnaJ from Bacillus cereus (strain AH820).